Reading from the N-terminus, the 835-residue chain is Replication origin-binding protein (835 aa).

The region spanning 54–215 is the Helicase ATP-binding domain; sequence PGMSQTRPVT…SGLRGDENIH (162 aa). 67–74 contacts ATP; that stretch reads APMGSGKT.

The protein belongs to the herpesviridae OriBP family. In terms of assembly, homodimer. Interacts with the major DNA-binding protein. Interacts with the helicase/primase component 52 and the polymerase accessory protein.

The protein resides in the host nucleus. In terms of biological role, functions as a docking protein to recruit essential components of the viral replication machinery to viral DNA origins. In the presence of the major DNA-binding protein, opens dsDNA leading to a conformational change in the origin that facilitates DNA unwinding and subsequent replication. The protein is Replication origin-binding protein of Varicella-zoster virus (strain Oka vaccine) (HHV-3).